The chain runs to 92 residues: Movement protein (92 aa).

The helical transmembrane segment at 38–58 (VIALVVILVSVGVFYLAYTLF) threads the bilayer.

Belongs to the mastrevirus movement protein family. As to quaternary structure, interacts with the capsid protein (CP). Part of a MP-CP-viral DNA complex.

It localises to the host membrane. Its function is as follows. Involved in the viral transport within, and between cells. The protein is Movement protein of Phaseolus vulgaris (Kidney bean).